The chain runs to 218 residues: Putative pre-16S rRNA nuclease (218 aa).

This sequence belongs to the YqgF nuclease family.

It localises to the cytoplasm. Its function is as follows. Could be a nuclease involved in processing of the 5'-end of pre-16S rRNA. The chain is Putative pre-16S rRNA nuclease from Thermotoga maritima (strain ATCC 43589 / DSM 3109 / JCM 10099 / NBRC 100826 / MSB8).